The chain runs to 329 residues: Malate dehydrogenase (329 aa).

12–18 is an NAD(+) binding site; the sequence is GAAGQIG. Substrate-binding residues include R93 and R99. NAD(+)-binding positions include N106, Q113, and 130 to 132; that span reads VGN. Substrate-binding residues include N132 and R163. Residue H188 is the Proton acceptor of the active site.

It belongs to the LDH/MDH superfamily. MDH type 2 family.

The catalysed reaction is (S)-malate + NAD(+) = oxaloacetate + NADH + H(+). Functionally, catalyzes the reversible oxidation of malate to oxaloacetate. The sequence is that of Malate dehydrogenase from Frankia casuarinae (strain DSM 45818 / CECT 9043 / HFP020203 / CcI3).